Reading from the N-terminus, the 730-residue chain is Elongation factor 2 (730 aa).

The tr-type G domain occupies 19–260 (VMIRNIAIIA…MVIRFLPSPI (242 aa)). Residues 28–35 (AHIDHGKT), 94–98 (DTPGH), and 148–151 (NKVD) contribute to the GTP site. At His-596 the chain carries Diphthamide.

It belongs to the TRAFAC class translation factor GTPase superfamily. Classic translation factor GTPase family. EF-G/EF-2 subfamily.

Its subcellular location is the cytoplasm. In terms of biological role, catalyzes the GTP-dependent ribosomal translocation step during translation elongation. During this step, the ribosome changes from the pre-translocational (PRE) to the post-translocational (POST) state as the newly formed A-site-bound peptidyl-tRNA and P-site-bound deacylated tRNA move to the P and E sites, respectively. Catalyzes the coordinated movement of the two tRNA molecules, the mRNA and conformational changes in the ribosome. In Methanococcoides methylutens, this protein is Elongation factor 2 (fusA).